The sequence spans 147 residues: Hemoglobin subunit epsilon (147 aa).

Positions 3–147 constitute a Globin domain; sequence HFTAEEKAII…VATALAHKYH (145 aa). Residues S14 and S51 each carry the phosphoserine modification. Heme b contacts are provided by H64 and H93.

Belongs to the globin family. Heterotetramer of two alpha chains and two epsilon chains in early embryonic hemoglobin Gower-2; two zeta chains and two epsilon chains in early embryonic hemoglobin Gower-1. In terms of tissue distribution, red blood cells.

Functionally, the epsilon chain is a beta-type chain of early mammalian embryonic hemoglobin. The sequence is that of Hemoglobin subunit epsilon (HBE1) from Otolemur crassicaudatus (Brown greater galago).